The following is a 90-amino-acid chain: Probable Fe(2+)-trafficking protein (90 aa).

This sequence belongs to the Fe(2+)-trafficking protein family.

In terms of biological role, could be a mediator in iron transactions between iron acquisition and iron-requiring processes, such as synthesis and/or repair of Fe-S clusters in biosynthetic enzymes. The polypeptide is Probable Fe(2+)-trafficking protein (Paraburkholderia xenovorans (strain LB400)).